A 129-amino-acid polypeptide reads, in one-letter code: Glycine cleavage system H protein (129 aa).

The region spanning 24–106 (SYTVGISEHA…FGDGWFFRVM (83 aa)) is the Lipoyl-binding domain. At Lys65 the chain carries N6-lipoyllysine.

The protein belongs to the GcvH family. As to quaternary structure, the glycine cleavage system is composed of four proteins: P, T, L and H. The cofactor is (R)-lipoate.

The glycine cleavage system catalyzes the degradation of glycine. The H protein shuttles the methylamine group of glycine from the P protein to the T protein. The chain is Glycine cleavage system H protein from Shewanella woodyi (strain ATCC 51908 / MS32).